Here is a 249-residue protein sequence, read N- to C-terminus: Coproheme decarboxylase (249 aa).

Residues arginine 131, 145–149 (YPMDK), histidine 172, and glutamine 185 each bind Fe-coproporphyrin III. Tyrosine 145 is an active-site residue.

This sequence belongs to the ChdC family. Type 1 subfamily. Fe-coproporphyrin III is required as a cofactor.

The catalysed reaction is Fe-coproporphyrin III + 2 H2O2 + 2 H(+) = heme b + 2 CO2 + 4 H2O. The enzyme catalyses Fe-coproporphyrin III + H2O2 + H(+) = harderoheme III + CO2 + 2 H2O. It carries out the reaction harderoheme III + H2O2 + H(+) = heme b + CO2 + 2 H2O. The protein operates within porphyrin-containing compound metabolism; protoheme biosynthesis. Its function is as follows. Involved in coproporphyrin-dependent heme b biosynthesis. Catalyzes the decarboxylation of Fe-coproporphyrin III (coproheme) to heme b (protoheme IX), the last step of the pathway. The reaction occurs in a stepwise manner with a three-propionate intermediate. The chain is Coproheme decarboxylase from Staphylococcus saprophyticus subsp. saprophyticus (strain ATCC 15305 / DSM 20229 / NCIMB 8711 / NCTC 7292 / S-41).